Reading from the N-terminus, the 456-residue chain is Bifunctional protein GlmU (456 aa).

Residues Met-1–Arg-228 form a pyrophosphorylase region. Residues Leu-10–Gly-13, Lys-24, Gln-75, and Gly-80–Thr-81 each bind UDP-N-acetyl-alpha-D-glucosamine. A Mg(2+)-binding site is contributed by Asp-105. Gly-142, Glu-157, Asn-172, and Asn-226 together coordinate UDP-N-acetyl-alpha-D-glucosamine. A Mg(2+)-binding site is contributed by Asn-226. Residues Leu-229–Ser-249 are linker. The N-acetyltransferase stretch occupies residues Gly-250–Gly-456. Arg-331 and Lys-349 together coordinate UDP-N-acetyl-alpha-D-glucosamine. Residue His-361 is the Proton acceptor of the active site. The UDP-N-acetyl-alpha-D-glucosamine site is built by Tyr-364 and Asn-375. Acetyl-CoA is bound by residues Ala-378, Asn-384 to Tyr-385, Ala-421, and Arg-437.

It in the N-terminal section; belongs to the N-acetylglucosamine-1-phosphate uridyltransferase family. The protein in the C-terminal section; belongs to the transferase hexapeptide repeat family. In terms of assembly, homotrimer. The cofactor is Mg(2+).

It localises to the cytoplasm. The catalysed reaction is alpha-D-glucosamine 1-phosphate + acetyl-CoA = N-acetyl-alpha-D-glucosamine 1-phosphate + CoA + H(+). It carries out the reaction N-acetyl-alpha-D-glucosamine 1-phosphate + UTP + H(+) = UDP-N-acetyl-alpha-D-glucosamine + diphosphate. Its pathway is nucleotide-sugar biosynthesis; UDP-N-acetyl-alpha-D-glucosamine biosynthesis; N-acetyl-alpha-D-glucosamine 1-phosphate from alpha-D-glucosamine 6-phosphate (route II): step 2/2. The protein operates within nucleotide-sugar biosynthesis; UDP-N-acetyl-alpha-D-glucosamine biosynthesis; UDP-N-acetyl-alpha-D-glucosamine from N-acetyl-alpha-D-glucosamine 1-phosphate: step 1/1. It functions in the pathway bacterial outer membrane biogenesis; LPS lipid A biosynthesis. Its function is as follows. Catalyzes the last two sequential reactions in the de novo biosynthetic pathway for UDP-N-acetylglucosamine (UDP-GlcNAc). The C-terminal domain catalyzes the transfer of acetyl group from acetyl coenzyme A to glucosamine-1-phosphate (GlcN-1-P) to produce N-acetylglucosamine-1-phosphate (GlcNAc-1-P), which is converted into UDP-GlcNAc by the transfer of uridine 5-monophosphate (from uridine 5-triphosphate), a reaction catalyzed by the N-terminal domain. This is Bifunctional protein GlmU from Gloeobacter violaceus (strain ATCC 29082 / PCC 7421).